Consider the following 145-residue polypeptide: MKGLLQRVKGARVEVAGEVVGSVDQGLLVLVAVEPDDTPASADKLLHKLLNYRVFSDAEGKMNLSLADVGGGLLLVSQFTLAADTKSGLRPSFSTAAPPALGEKLFDYLLSRAKQMHGTVASGRFGADMQVHLVNDGPVTFLLQT.

The Gly-cisPro motif, important for rejection of L-amino acids signature appears at 137-138; it reads GP.

Belongs to the DTD family. Homodimer.

It localises to the cytoplasm. It catalyses the reaction glycyl-tRNA(Ala) + H2O = tRNA(Ala) + glycine + H(+). The enzyme catalyses a D-aminoacyl-tRNA + H2O = a tRNA + a D-alpha-amino acid + H(+). Functionally, an aminoacyl-tRNA editing enzyme that deacylates mischarged D-aminoacyl-tRNAs. Also deacylates mischarged glycyl-tRNA(Ala), protecting cells against glycine mischarging by AlaRS. Acts via tRNA-based rather than protein-based catalysis; rejects L-amino acids rather than detecting D-amino acids in the active site. By recycling D-aminoacyl-tRNA to D-amino acids and free tRNA molecules, this enzyme counteracts the toxicity associated with the formation of D-aminoacyl-tRNA entities in vivo and helps enforce protein L-homochirality. In Pseudomonas fluorescens (strain Pf0-1), this protein is D-aminoacyl-tRNA deacylase.